Here is a 147-residue protein sequence, read N- to C-terminus: Hemoglobin subunit beta (147 aa).

In terms of domain architecture, Globin spans 3–147 (HWTAEEKQLI…VAHALARKYH (145 aa)). Positions 64 and 93 each coordinate heme b.

Belongs to the globin family. In terms of assembly, heterotetramer of two alpha chains and two beta chains. As to expression, red blood cells.

Involved in oxygen transport from the lung to the various peripheral tissues. This is Hemoglobin subunit beta (HBB) from Cairina moschata (Muscovy duck).